We begin with the raw amino-acid sequence, 491 residues long: Glutamyl-tRNA(Gln) amidotransferase subunit A (491 aa).

Catalysis depends on charge relay system residues Lys77 and Ser152. Ser176 (acyl-ester intermediate) is an active-site residue.

It belongs to the amidase family. GatA subfamily. In terms of assembly, heterotrimer of A, B and C subunits.

It catalyses the reaction L-glutamyl-tRNA(Gln) + L-glutamine + ATP + H2O = L-glutaminyl-tRNA(Gln) + L-glutamate + ADP + phosphate + H(+). Functionally, allows the formation of correctly charged Gln-tRNA(Gln) through the transamidation of misacylated Glu-tRNA(Gln) in organisms which lack glutaminyl-tRNA synthetase. The reaction takes place in the presence of glutamine and ATP through an activated gamma-phospho-Glu-tRNA(Gln). This chain is Glutamyl-tRNA(Gln) amidotransferase subunit A, found in Chlamydia abortus (strain DSM 27085 / S26/3) (Chlamydophila abortus).